The primary structure comprises 436 residues: Protein TolB homolog (436 aa).

The N-terminal stretch at 1 to 27 is a signal peptide; the sequence is MRHSIRLTAALLLAFIACFSFPLSAMA.

This sequence belongs to the TolB family.

Its subcellular location is the periplasm. The sequence is that of Protein TolB homolog from Chlorobium luteolum (strain DSM 273 / BCRC 81028 / 2530) (Pelodictyon luteolum).